Reading from the N-terminus, the 1026-residue chain is Multidrug resistance protein MdtC (1026 aa).

The next 11 membrane-spanning stretches (helical) occupy residues 15-35, 333-353, 360-380, 387-407, 431-451, 463-483, 528-548, 853-873, 897-917, 953-973, and 984-1004; these read ILIAAAITLCGILGFRLLPVA, EVEETLAISVALVILVVFLFL, LIPAVAVPVSLIGTFAAMYLC, LSLMALTIATGFVVDDAIVVL, VGFTVISMSLSLVAVFLPLLL, FAVTLSVAIGISLVVSLTLTP, LVGVVFLGTVALNIWLYIAIP, LILIVAAIATVYIVLGILYES, LFNAPFSLIALIGIMLLIGIV, PIMMTTLAALFGALPLVLSDG, and ITIVGGLVMSQLLTLYTTPVV.

This sequence belongs to the resistance-nodulation-cell division (RND) (TC 2.A.6) family. MdtC subfamily. Part of a tripartite efflux system composed of MdtA, MdtB and MdtC. MdtC forms a heteromultimer with MdtB.

It localises to the cell inner membrane. The polypeptide is Multidrug resistance protein MdtC (Salmonella heidelberg (strain SL476)).